The chain runs to 484 residues: ATP synthase subunit beta (484 aa).

Position 156–163 (156–163 (GGAGVGKT)) interacts with ATP.

Belongs to the ATPase alpha/beta chains family. F-type ATPases have 2 components, CF(1) - the catalytic core - and CF(0) - the membrane proton channel. CF(1) has five subunits: alpha(3), beta(3), gamma(1), delta(1), epsilon(1). CF(0) has three main subunits: a(1), b(2) and c(9-12). The alpha and beta chains form an alternating ring which encloses part of the gamma chain. CF(1) is attached to CF(0) by a central stalk formed by the gamma and epsilon chains, while a peripheral stalk is formed by the delta and b chains.

It is found in the cell inner membrane. It catalyses the reaction ATP + H2O + 4 H(+)(in) = ADP + phosphate + 5 H(+)(out). Functionally, produces ATP from ADP in the presence of a proton gradient across the membrane. The catalytic sites are hosted primarily by the beta subunits. This Rhizorhabdus wittichii (strain DSM 6014 / CCUG 31198 / JCM 15750 / NBRC 105917 / EY 4224 / RW1) (Sphingomonas wittichii) protein is ATP synthase subunit beta.